The primary structure comprises 718 residues: Sodium/myo-inositol cotransporter (718 aa).

Residues methionine 1–aspartate 9 are Extracellular-facing. Residues isoleucine 10–tryptophan 29 traverse the membrane as a helical segment. The Cytoplasmic portion of the chain corresponds to lysine 30–glycine 38. Residues tyrosine 39–valine 57 form a helical membrane-spanning segment. Residues serine 58–alanine 86 are Extracellular-facing. A helical transmembrane segment spans residues leucine 87–proline 110. The Cytoplasmic segment spans residues glutamate 111–glutamine 123. Residues valine 124 to tyrosine 144 traverse the membrane as a helical segment. Residues serine 145 to asparagine 157 are Extracellular-facing. The helical transmembrane segment at leucine 158–tyrosine 183 threads the bilayer. The Cytoplasmic portion of the chain corresponds to threonine 184–threonine 186. A helical transmembrane segment spans residues leucine 187–methionine 205. The Extracellular segment spans residues glutamate 206 to glycine 303. Residue asparagine 232 is glycosylated (N-linked (GlcNAc...) asparagine). The chain crosses the membrane as a helical span at residues phenylalanine 304 to phenylalanine 324. The Cytoplasmic portion of the chain corresponds to alanine 325–arginine 353. The helical transmembrane segment at leucine 354 to methionine 376 threads the bilayer. The Extracellular segment spans residues serine 377–glutamate 406. Residues leucine 407–valine 430 form a helical membrane-spanning segment. The Cytoplasmic segment spans residues glutamate 431–glutamate 443. A helical membrane pass occupies residues valine 444–tryptophan 462. At lysine 463–histidine 510 the chain is on the extracellular side. Residues tyrosine 511–leucine 532 traverse the membrane as a helical segment. At threonine 533–lysine 695 the chain is on the cytoplasmic side. Residues serine 594 and serine 632 each carry the phosphoserine modification. A helical transmembrane segment spans residues valine 696–phenylalanine 716. The Extracellular portion of the chain corresponds to serine 717–leucine 718.

Belongs to the sodium:solute symporter (SSF) (TC 2.A.21) family. Interacts with KCNQ2 (via the pore module). Interacts with KCNQ1; this interaction is direct. Forms coregulatory complexes with ion channels KCNQ2-KCNQ3 and KCNQ1-KCNE2.

Its subcellular location is the apical cell membrane. It localises to the basolateral cell membrane. Its function is as follows. Electrogenic Na(+)-coupled sugar symporter that actively transports myo-inositol and its stereoisomer scyllo-inositol across the plasma membrane, with a Na(+) to sugar coupling ratio of 2:1. Maintains myo-inositol concentration gradient that defines cell volume and fluid balance during osmotic stress, in particular in the fetoplacental unit and central nervous system. Forms coregulatory complexes with voltage-gated K(+) ion channels, allosterically altering ion selectivity, voltage dependence and gating kinetics of the channel. In turn, K(+) efflux through the channel forms a local electrical gradient that modulates electrogenic Na(+)-coupled myo-inositol influx through the transporter. Associates with KCNQ1-KCNE2 channel in the apical membrane of choroid plexus epithelium and regulates the myo-inositol gradient between blood and cerebrospinal fluid with an impact on neuron excitability. Associates with KCNQ2-KCNQ3 channel altering ion selectivity, increasing Na(+) and Cs(+) permeation relative to K(+) permeation. Provides myo-inositol precursor for biosynthesis of phosphoinositides such as PI(4,5)P2, thus indirectly affecting the activity of phosphoinositide-dependent ion channels and Ca(2+) signaling upon osmotic stress. The protein is Sodium/myo-inositol cotransporter (SLC5A3) of Bos taurus (Bovine).